Consider the following 273-residue polypeptide: Dermonecrotic toxin LspaSicTox-alphaIA1iii (273 aa).

The active site involves His-5. Mg(2+) is bound by residues Glu-25 and Asp-27. His-41 (nucleophile) is an active-site residue. Intrachain disulfides connect Cys-45–Cys-51 and Cys-47–Cys-190. Residue Asp-85 participates in Mg(2+) binding.

The protein belongs to the arthropod phospholipase D family. Class II subfamily. The cofactor is Mg(2+). As to expression, expressed by the venom gland.

It localises to the secreted. The catalysed reaction is an N-(acyl)-sphingosylphosphocholine = an N-(acyl)-sphingosyl-1,3-cyclic phosphate + choline. The enzyme catalyses an N-(acyl)-sphingosylphosphoethanolamine = an N-(acyl)-sphingosyl-1,3-cyclic phosphate + ethanolamine. It catalyses the reaction a 1-acyl-sn-glycero-3-phosphocholine = a 1-acyl-sn-glycero-2,3-cyclic phosphate + choline. It carries out the reaction a 1-acyl-sn-glycero-3-phosphoethanolamine = a 1-acyl-sn-glycero-2,3-cyclic phosphate + ethanolamine. Dermonecrotic toxins cleave the phosphodiester linkage between the phosphate and headgroup of certain phospholipids (sphingolipid and lysolipid substrates), forming an alcohol (often choline) and a cyclic phosphate. This toxin acts on sphingomyelin (SM). It may also act on ceramide phosphoethanolamine (CPE), lysophosphatidylcholine (LPC) and lysophosphatidylethanolamine (LPE), but not on lysophosphatidylserine (LPS), and lysophosphatidylglycerol (LPG). It acts by transphosphatidylation, releasing exclusively cyclic phosphate products as second products. Induces dermonecrosis, hemolysis, increased vascular permeability, edema, inflammatory response, and platelet aggregation. The chain is Dermonecrotic toxin LspaSicTox-alphaIA1iii from Loxosceles spadicea (Recluse spider).